The sequence spans 620 residues: Chaperone protein DnaK (620 aa).

T197 is subject to Phosphothreonine; by autocatalysis. Residues 591 to 620 are disordered; the sequence is AQKLGEAMANKNNAEQPKKKDDDVIDAEVE.

The protein belongs to the heat shock protein 70 family.

Acts as a chaperone. The polypeptide is Chaperone protein DnaK (Helicobacter pylori (strain HPAG1)).